The following is a 311-amino-acid chain: Methionyl-tRNA formyltransferase (311 aa).

110–113 lines the (6S)-5,6,7,8-tetrahydrofolate pocket; that stretch reads SLLP.

Belongs to the Fmt family.

The enzyme catalyses L-methionyl-tRNA(fMet) + (6R)-10-formyltetrahydrofolate = N-formyl-L-methionyl-tRNA(fMet) + (6S)-5,6,7,8-tetrahydrofolate + H(+). In terms of biological role, attaches a formyl group to the free amino group of methionyl-tRNA(fMet). The formyl group appears to play a dual role in the initiator identity of N-formylmethionyl-tRNA by promoting its recognition by IF2 and preventing the misappropriation of this tRNA by the elongation apparatus. This chain is Methionyl-tRNA formyltransferase, found in Streptococcus pneumoniae serotype 19F (strain G54).